We begin with the raw amino-acid sequence, 112 residues long: UPF0251 protein MA_4245 (112 aa).

The protein belongs to the UPF0251 family.

The sequence is that of UPF0251 protein MA_4245 from Methanosarcina acetivorans (strain ATCC 35395 / DSM 2834 / JCM 12185 / C2A).